The primary structure comprises 263 residues: Endonuclease 8 (263 aa).

Pro-2 serves as the catalytic Schiff-base intermediate with DNA. Glu-3 functions as the Proton donor in the catalytic mechanism. Lys-53 serves as the catalytic Proton donor; for beta-elimination activity. The DNA site is built by Gln-70, Arg-125, and Asn-169. An FPG-type zinc finger spans residues 229-263 (KVFHREGESCERCGGTIERTMLSSRPFYWCPHCQS). Catalysis depends on Arg-253, which acts as the Proton donor; for delta-elimination activity.

The protein belongs to the FPG family. The cofactor is Zn(2+).

It carries out the reaction 2'-deoxyribonucleotide-(2'-deoxyribose 5'-phosphate)-2'-deoxyribonucleotide-DNA = a 3'-end 2'-deoxyribonucleotide-(2,3-dehydro-2,3-deoxyribose 5'-phosphate)-DNA + a 5'-end 5'-phospho-2'-deoxyribonucleoside-DNA + H(+). In terms of biological role, involved in base excision repair of DNA damaged by oxidation or by mutagenic agents. Acts as a DNA glycosylase that recognizes and removes damaged bases. Has a preference for oxidized pyrimidines, such as thymine glycol, 5,6-dihydrouracil and 5,6-dihydrothymine. Has AP (apurinic/apyrimidinic) lyase activity and introduces nicks in the DNA strand. Cleaves the DNA backbone by beta-delta elimination to generate a single-strand break at the site of the removed base with both 3'- and 5'-phosphates. The protein is Endonuclease 8 of Pectobacterium atrosepticum (strain SCRI 1043 / ATCC BAA-672) (Erwinia carotovora subsp. atroseptica).